The chain runs to 312 residues: uncharacterized protein (312 aa).

It localises to the mitochondrion. This is an uncharacterized protein from Schizosaccharomyces pombe (strain 972 / ATCC 24843) (Fission yeast).